The primary structure comprises 272 residues: Bis(5'-nucleosyl)-tetraphosphatase, symmetrical (272 aa).

Belongs to the Ap4A hydrolase family.

It carries out the reaction P(1),P(4)-bis(5'-adenosyl) tetraphosphate + H2O = 2 ADP + 2 H(+). Hydrolyzes diadenosine 5',5'''-P1,P4-tetraphosphate to yield ADP. The protein is Bis(5'-nucleosyl)-tetraphosphatase, symmetrical of Wigglesworthia glossinidia brevipalpis.